The chain runs to 300 residues: 3-hydroxy-3-isohexenylglutaryl-CoA/hydroxy-methylglutaryl-CoA lyase (300 aa).

Positions 7 to 274 constitute a Pyruvate carboxyltransferase domain; sequence VRLVEVGPRD…HTGVDMHALV (268 aa). Arg15 is a substrate binding site. Positions 16, 207, and 209 each coordinate a divalent metal cation. The active site involves Cys240. Position 249 (Asn249) interacts with a divalent metal cation.

Belongs to the HMG-CoA lyase family. Homodimer. Mg(2+) is required as a cofactor. Requires Mn(2+) as cofactor.

The enzyme catalyses 3-hydroxy-3-(4-methylpent-3-en-1-yl)glutaryl-CoA = 7-methyl-3-oxooct-6-enoyl-CoA + acetate. It catalyses the reaction (3S)-3-hydroxy-3-methylglutaryl-CoA = acetoacetate + acetyl-CoA. The protein operates within metabolic intermediate metabolism; (S)-3-hydroxy-3-methylglutaryl-CoA degradation; acetoacetate from (S)-3-hydroxy-3-methylglutaryl-CoA: step 1/1. Its function is as follows. Involved in the L-leucine, isovalerate and acyclic monoterpene catabolism. Catalyzes the cleavage of 3-hydroxy-3-methylglutaryl-CoA (HMG-CoA) to yield acetyl-CoA and acetoacetate. It can also catalyze the cleavage of 3-hydroxy-3-isohexenylglutaryl-CoA (HIHG_CoA) to yield 7-methyl-3-oxooct-6-enoyl-CoA and acetate. The sequence is that of 3-hydroxy-3-isohexenylglutaryl-CoA/hydroxy-methylglutaryl-CoA lyase from Pseudomonas aeruginosa (strain ATCC 15692 / DSM 22644 / CIP 104116 / JCM 14847 / LMG 12228 / 1C / PRS 101 / PAO1).